Consider the following 150-residue polypeptide: DNA-directed RNA polymerases I, II, and III subunit RPABC3 (150 aa).

An N-acetylalanine modification is found at A2.

This sequence belongs to the eukaryotic RPB8 RNA polymerase subunit family. As to quaternary structure, component of the RNA polymerase I (Pol I), RNA polymerase II (Pol II) and RNA polymerase III (Pol III) complexes consisting of at least 13, 12 and 17 subunits, respectively. Pol I complex consists of a ten-subunit catalytic core composed of POLR1A/RPA1, POLR1B/RPA2, POLR1C/RPAC1, POLR1D/RPAC2, POLR1H/RPA12, POLR2E/RPABC1, POLR2F/RPABC2, POLR2H/RPABC3, POLR2K/RPABC4 and POLR2L/RPABC5; a mobile stalk subunit POLR1F/RPA43 protruding from the core and additional subunits homologous to general transcription factors POLR1E/RPA49 and POLR1G/RPA34. Part of Pol I pre-initiation complex (PIC), in which Pol I core assembles with RRN3 and promoter-bound UTBF and SL1/TIF-IB complex. Pol II complex contains a ten-subunit catalytic core composed of POLR2A/RPB1, POLR2B/RPB2, POLR2C/RPB3, POLR2I/RPB9, POLR2J/RPB11, POLR2E/RPABC1, POLR2F/RPABC2, POLR2H/RPABC3, POLR2K/RPABC4 and POLR2L/RPABC5 and a mobile stalk composed of two subunits POLR2D/RPB4 and POLR2G/RPB7. Part of Pol II(G) complex, in which Pol II core associates with an additional subunit POLR2M; unlike conventional Pol II, Pol II(G) functions as a transcriptional repressor. Part of Pol II pre-initiation complex (PIC), in which Pol II core assembles with Mediator, general transcription factors and other specific initiation factors including GTF2E1, GTF2E2, GTF2F1, GTF2F2, TCEA1, ERCC2, ERCC3, GTF2H2, GTF2H3, GTF2H4, GTF2H5, GTF2A1, GTF2A2, GTF2B and TBP; this large multi-subunit PIC complex mediates DNA unwinding and targets Pol II core to the transcription start site where the first phosphodiester bond forms. Directly interacts with POLR2A. Pol III complex consists of a ten-subunit catalytic core composed of POLR3A/RPC1, POLR3B/RPC2, POLR1C/RPAC1, POLR1D/RPAC2, POLR3K/RPC10, POLR2E/RPABC1, POLR2F/RPABC2, POLR2H/RPABC3, POLR2K/RPABC4 and POLR2L/RPABC5; a mobile stalk composed of two subunits POLR3H/RPC8 and CRCP/RPC9, protruding from the core and functioning primarily in transcription initiation; and additional subunits homologous to general transcription factors of the RNA polymerase II machinery, POLR3C/RPC3-POLR3F/RPC6-POLR3G/RPC7 heterotrimer required for transcription initiation and POLR3D/RPC4-POLR3E/RPC5 heterodimer involved in both transcription initiation and termination.

Its subcellular location is the nucleus. The protein localises to the nucleolus. DNA-dependent RNA polymerase catalyzes the transcription of DNA into RNA using the four ribonucleoside triphosphates as substrates. Common component of RNA polymerases I, II and III which synthesize ribosomal RNA precursors, mRNA precursors and many functional non-coding RNAs, and small RNAs, such as 5S rRNA and tRNAs, respectively. This chain is DNA-directed RNA polymerases I, II, and III subunit RPABC3 (POLR2H), found in Bos taurus (Bovine).